The chain runs to 61 residues: Large ribosomal subunit protein eL37 (61 aa).

Positions 20, 23, 35, and 38 each coordinate Zn(2+). The C4-type zinc finger occupies 20–38 (CRRCGRRAYHVRKKRCAAC).

It belongs to the eukaryotic ribosomal protein eL37 family. The cofactor is Zn(2+).

In terms of biological role, binds to the 23S rRNA. In Methanocaldococcus jannaschii (strain ATCC 43067 / DSM 2661 / JAL-1 / JCM 10045 / NBRC 100440) (Methanococcus jannaschii), this protein is Large ribosomal subunit protein eL37 (rpl37e).